The primary structure comprises 152 residues: Lipoprotein signal peptidase (152 aa).

Transmembrane regions (helical) follow at residues 55–75 (NKMW…VFYM) and 85–105 (LGIS…DRVF). Catalysis depends on residues Asp111 and Asp129. A helical transmembrane segment spans residues 124–144 (VFNIADSALCIGVVLIIIQTL).

It belongs to the peptidase A8 family.

It localises to the cell membrane. It carries out the reaction Release of signal peptides from bacterial membrane prolipoproteins. Hydrolyzes -Xaa-Yaa-Zaa-|-(S,diacylglyceryl)Cys-, in which Xaa is hydrophobic (preferably Leu), and Yaa (Ala or Ser) and Zaa (Gly or Ala) have small, neutral side chains.. It functions in the pathway protein modification; lipoprotein biosynthesis (signal peptide cleavage). Its function is as follows. This protein specifically catalyzes the removal of signal peptides from prolipoproteins. This Bacillus cereus (strain AH187) protein is Lipoprotein signal peptidase.